Reading from the N-terminus, the 373-residue chain is Spermidine/putrescine import ATP-binding protein PotA (373 aa).

The 231-residue stretch at 11 to 241 folds into the ABC transporter domain; it reads IELRSLKKSY…PSNLFVAKFI (231 aa). 43 to 50 is a binding site for ATP; sequence GPSGCGKT.

This sequence belongs to the ABC transporter superfamily. Spermidine/putrescine importer (TC 3.A.1.11.1) family. The complex is composed of two ATP-binding proteins (PotA), two transmembrane proteins (PotB and PotC) and a solute-binding protein (PotD).

It is found in the cell inner membrane. It catalyses the reaction ATP + H2O + polyamine-[polyamine-binding protein]Side 1 = ADP + phosphate + polyamineSide 2 + [polyamine-binding protein]Side 1.. In terms of biological role, part of the ABC transporter complex PotABCD involved in spermidine/putrescine import. Responsible for energy coupling to the transport system. The polypeptide is Spermidine/putrescine import ATP-binding protein PotA (Mannheimia succiniciproducens (strain KCTC 0769BP / MBEL55E)).